The primary structure comprises 155 residues: Ribosomal RNA large subunit methyltransferase H (155 aa).

Residues leucine 72, glycine 103, and 122–127 (LSDLTL) contribute to the S-adenosyl-L-methionine site.

The protein belongs to the RNA methyltransferase RlmH family. As to quaternary structure, homodimer.

Its subcellular location is the cytoplasm. The enzyme catalyses pseudouridine(1915) in 23S rRNA + S-adenosyl-L-methionine = N(3)-methylpseudouridine(1915) in 23S rRNA + S-adenosyl-L-homocysteine + H(+). Specifically methylates the pseudouridine at position 1915 (m3Psi1915) in 23S rRNA. This chain is Ribosomal RNA large subunit methyltransferase H, found in Paracidovorax citrulli (strain AAC00-1) (Acidovorax citrulli).